The sequence spans 102 residues: Small ribosomal subunit protein bS18c (102 aa).

The segment covering 1–19 (MDKTKRPLRKSKRSFRRRL) has biased composition (basic residues). The tract at residues 1–26 (MDKTKRPLRKSKRSFRRRLPPPIGSG) is disordered.

The protein belongs to the bacterial ribosomal protein bS18 family. Part of the 30S ribosomal subunit.

It is found in the plastid. Its subcellular location is the chloroplast. This is Small ribosomal subunit protein bS18c from Piper cenocladum (Ant piper).